The primary structure comprises 570 residues: Phosphocholine hydrolase Lem3 (570 aa).

The protein resides in the secreted. Its subcellular location is the host cytoplasm. The enzyme catalyses [Rab1 protein]-O-phosphocholine-L-serine + H2O = [Rab1 protein]-L-serine + phosphocholine + H(+). Functionally, virulence effector that plays a role in hijacking the host vesicular trafficking by recruiting the small guanosine triphosphatase (GTPase) Rab1 to the cytosolic face of the Legionella-containing vacuole (LCVs). Acts as a phosphocholine hydrolase by mediating the hydrolysis of phosphocholine to Ser residues of host RAB1 (RAB1A, RAB1B or RAB1C). Dephosphocholination of target proteins restores accessibility to GTPase effector LepB. Can act on both GDP-bound and GTP-bound Rab proteins. In Legionella pneumophila subsp. pneumophila (strain Philadelphia 1 / ATCC 33152 / DSM 7513), this protein is Phosphocholine hydrolase Lem3 (lem3).